The chain runs to 487 residues: Malonate-semialdehyde dehydrogenase 2 (487 aa).

Residues Phe-154, Lys-178, Glu-181, Arg-182, and Ser-231 each contribute to the NAD(+) site. Residue Cys-286 is the Nucleophile of the active site. Residue Glu-386 participates in NAD(+) binding.

Belongs to the aldehyde dehydrogenase family. IolA subfamily. Homotetramer.

The catalysed reaction is 3-oxopropanoate + NAD(+) + CoA + H2O = hydrogencarbonate + acetyl-CoA + NADH + H(+). It catalyses the reaction 2-methyl-3-oxopropanoate + NAD(+) + CoA + H2O = propanoyl-CoA + hydrogencarbonate + NADH + H(+). Its pathway is polyol metabolism; myo-inositol degradation into acetyl-CoA; acetyl-CoA from myo-inositol: step 7/7. Its function is as follows. Catalyzes the oxidation of malonate semialdehyde (MSA) and methylmalonate semialdehyde (MMSA) into acetyl-CoA and propanoyl-CoA, respectively. Is involved in a myo-inositol catabolic pathway. Bicarbonate, and not CO2, is the end-product of the enzymatic reaction. This Bacillus anthracis protein is Malonate-semialdehyde dehydrogenase 2.